The chain runs to 520 residues: Trichothecene O-acetyltransferase TRI3 (520 aa).

Positions 1–23 (MGSKLPELPKLSPEKHRWEKSNV) are disordered. Positions 12-23 (SPEKHRWEKSNV) are enriched in basic and acidic residues.

Belongs to the trichothecene O-acetyltransferase family.

It participates in sesquiterpene biosynthesis; trichothecene biosynthesis. Trichothecene O-acetyltransferase; part of the gene cluster that mediates the production of the antimicrobial trichothecene harzianum A (HA) that plays a role in Botrytis cinerea antagonistic activity and plant defense priming. The biosynthesis of harzianum A begins with the cyclization of farnesyl diphosphate to trichodiene and is catalyzed by the trichodiene synthase TRI5. Trichodiene undergoes a series of oxygenations catalyzed by the cytochrome P450 monooxygenase TRI4. TRI4 controls the addition of 3 oxygens at C-2, C-11, and the C-12, C-13-epoxide to form the intermediate isotrichodiol. Isotrichodiol then undergoes a non-enzymatic isomerization and cyclization to form 12,13-epoxytrichothec-9-ene (EPT) which is further converted to trichodermol by the cytochrome P450 monooxygenase TRI11 via C-4 hydroxylation. The last step of HA synthesis is esterification of an octatriendioyl moiety to the C-4 oxygen of trichodermol. The octatriendioyl moiety is probably produced by the polyketide synthase TRI17 and the esterification performed by the trichothecene O-acetyltransferase TRI3. The sequence is that of Trichothecene O-acetyltransferase TRI3 from Trichoderma arundinaceum.